We begin with the raw amino-acid sequence, 282 residues long: 4-hydroxybenzoate octaprenyltransferase (282 aa).

The next 9 helical transmembrane spans lie at 17 to 37 (IGIL…NQGF), 40 to 60 (IDLL…GCVI), 90 to 110 (AFIL…KLPI), 113 to 133 (FYFA…KRFL), 135 to 155 (APQL…FIAS), 163 to 183 (FVVL…MYAM), 207 to 227 (LIIA…AINK), 231 to 251 (WFFY…LKLI), and 262 to 282 (AFLV…LALI).

The protein belongs to the UbiA prenyltransferase family. Mg(2+) serves as cofactor.

Its subcellular location is the cell inner membrane. The catalysed reaction is all-trans-octaprenyl diphosphate + 4-hydroxybenzoate = 4-hydroxy-3-(all-trans-octaprenyl)benzoate + diphosphate. Its pathway is cofactor biosynthesis; ubiquinone biosynthesis. Catalyzes the prenylation of para-hydroxybenzoate (PHB) with an all-trans polyprenyl group. Mediates the second step in the final reaction sequence of ubiquinone-8 (UQ-8) biosynthesis, which is the condensation of the polyisoprenoid side chain with PHB, generating the first membrane-bound Q intermediate 3-octaprenyl-4-hydroxybenzoate. This chain is 4-hydroxybenzoate octaprenyltransferase, found in Legionella pneumophila (strain Paris).